Here is a 132-residue protein sequence, read N- to C-terminus: Replication enhancer protein (132 aa).

Belongs to the geminiviridae replication enhancer protein family. As to quaternary structure, homooligomer. Interacts with the replication-associated protein (REP). Interacts with host proliferating cell nuclear antigen (PCNA). Interacts with host retinoblastoma-related protein 1 (RBR1), and may thereby deregulate the host cell cycle. Oligomerization and interaction with PCNA are necessary for optimal replication enhancement.

Its function is as follows. Increases viral DNA accumulation. Enhances infectivity and symptom expression. The protein is Replication enhancer protein of Solanum lycopersicum (Tomato).